A 188-amino-acid chain; its full sequence is UPF0461 protein C5orf24 homolog (188 aa).

S37 carries the phosphoserine modification. Residue K75 forms a Glycyl lysine isopeptide (Lys-Gly) (interchain with G-Cter in SUMO2) linkage. The segment at K79–P142 is disordered. Residues K80 to R92 are compositionally biased toward basic residues. The span at S94 to G107 shows a compositional bias: polar residues. Phosphoserine occurs at positions 121 and 180. Residue K184 forms a Glycyl lysine isopeptide (Lys-Gly) (interchain with G-Cter in SUMO2) linkage.

It belongs to the UPF0461 family.

This chain is UPF0461 protein C5orf24 homolog, found in Bos taurus (Bovine).